Here is a 499-residue protein sequence, read N- to C-terminus: Putative protein phosphatase 2C 76 (499 aa).

Positions 1-34 (MRLGCSGRRRRLLRAALLRLVVLVLVAPPRRCAG) are cleaved as a signal peptide. The interval 67 to 101 (AGSGGEGDGDRRSSSSSPPPPPHPRGCHVAVDRGR) is disordered. Residues 92-457 (GCHVAVDRGR…DNVAAVIVPL (366 aa)) form the PPM-type phosphatase domain. Mn(2+) contacts are provided by Asp138 and Gly139. Positions 286–306 (KKTSVVSGKRRRKRNSNNRDD) are disordered. Positions 397 and 448 each coordinate Mn(2+).

It belongs to the PP2C family. Requires Mg(2+) as cofactor. Mn(2+) serves as cofactor.

It catalyses the reaction O-phospho-L-seryl-[protein] + H2O = L-seryl-[protein] + phosphate. The catalysed reaction is O-phospho-L-threonyl-[protein] + H2O = L-threonyl-[protein] + phosphate. The chain is Putative protein phosphatase 2C 76 from Oryza sativa subsp. japonica (Rice).